Reading from the N-terminus, the 177-residue chain is ATP synthase subunit delta (177 aa).

This sequence belongs to the ATPase delta chain family. F-type ATPases have 2 components, F(1) - the catalytic core - and F(0) - the membrane proton channel. F(1) has five subunits: alpha(3), beta(3), gamma(1), delta(1), epsilon(1). F(0) has three main subunits: a(1), b(2) and c(10-14). The alpha and beta chains form an alternating ring which encloses part of the gamma chain. F(1) is attached to F(0) by a central stalk formed by the gamma and epsilon chains, while a peripheral stalk is formed by the delta and b chains.

It localises to the cell inner membrane. F(1)F(0) ATP synthase produces ATP from ADP in the presence of a proton or sodium gradient. F-type ATPases consist of two structural domains, F(1) containing the extramembraneous catalytic core and F(0) containing the membrane proton channel, linked together by a central stalk and a peripheral stalk. During catalysis, ATP synthesis in the catalytic domain of F(1) is coupled via a rotary mechanism of the central stalk subunits to proton translocation. Functionally, this protein is part of the stalk that links CF(0) to CF(1). It either transmits conformational changes from CF(0) to CF(1) or is implicated in proton conduction. In Shewanella denitrificans (strain OS217 / ATCC BAA-1090 / DSM 15013), this protein is ATP synthase subunit delta.